The following is a 97-amino-acid chain: MICOS complex subunit MIC12 (97 aa).

Residues 7 to 24 form a helical membrane-spanning segment; sequence LTSITAVSSTLAASYYFY.

It belongs to the MICOS complex subunit Mic12 family. As to quaternary structure, component of the mitochondrial contact site and cristae organizing system (MICOS) complex.

It localises to the mitochondrion inner membrane. In terms of biological role, component of the MICOS complex, a large protein complex of the mitochondrial inner membrane that plays crucial roles in the maintenance of crista junctions, inner membrane architecture, and formation of contact sites to the outer membrane. In Zygosaccharomyces rouxii (strain ATCC 2623 / CBS 732 / NBRC 1130 / NCYC 568 / NRRL Y-229), this protein is MICOS complex subunit MIC12 (AIM5).